The sequence spans 325 residues: Lactonase drp35 (325 aa).

Positions 46, 108, 110, 128, 131, 133, 136, 183, 234, and 235 each coordinate Ca(2+). Aspartate 234 acts as the Proton donor in catalysis.

This sequence belongs to the SMP-30/CGR1 family. It depends on Ca(2+) as a cofactor.

It is found in the cytoplasm. Functionally, exhibits lactonase activity. Acts in cells with perturbed membrane integrity and is possibly related to the membrane homeostasis. This Staphylococcus haemolyticus (strain JCSC1435) protein is Lactonase drp35 (drp35).